A 351-amino-acid polypeptide reads, in one-letter code: Transcription elongation factor A N-terminal and central domain-containing protein (351 aa).

One can recognise a TFIIS N-terminal domain in the interval 5-82 (NQIAARASLI…SKWKAVYKQT (78 aa)). 2 disordered regions span residues 86–119 (ARNSPKLFPVRGNKEENSGPSHDPSQNETLGICS) and 144–169 (LKPKEEHFGDGDPESTGKRSSELLDP). Residues 103–119 (SGPSHDPSQNETLGICS) show a composition bias toward polar residues. Over residues 145–165 (KPKEEHFGDGDPESTGKRSSE) the composition is skewed to basic and acidic residues. Residues 173–289 (MRTKCIELLY…EHYLPQVIDG (117 aa)) form the TFIIS central domain.

This Homo sapiens (Human) protein is Transcription elongation factor A N-terminal and central domain-containing protein (TCEANC).